Consider the following 140-residue polypeptide: Lipoprotein MlpG (140 aa).

The signal sequence occupies residues 1-17 (MKIINILFCLFLLMLNG). The N-palmitoyl cysteine moiety is linked to residue C18. C18 carries S-diacylglycerol cysteine lipidation. The interval 22–57 (DTNTKQTKSRQKRDLTQKEATQEKPKSKSKEDLLRE) is disordered. Positions 33-57 (KRDLTQKEATQEKPKSKSKEDLLRE) are enriched in basic and acidic residues.

The protein belongs to the Multicopy lipoprotein (Mlp) family.

Its subcellular location is the cell outer membrane. In terms of biological role, an outer membrane protein that may participate in pathogenesis. Some human Lyme disease patients have antibodies against this protein. The Mlp proteins probably undergo intragenic recombination, generating new alleles. This chain is Lipoprotein MlpG, found in Borreliella burgdorferi (strain ATCC 35210 / DSM 4680 / CIP 102532 / B31) (Borrelia burgdorferi).